The sequence spans 64 residues: Large ribosomal subunit protein bL35 (64 aa).

A disordered region spans residues 1–44 (MPKLKTNRGAAKRFKVKASGRISRARSNHSHILTKKDPKRKRRL). Residues 10–44 (AAKRFKVKASGRISRARSNHSHILTKKDPKRKRRL) show a composition bias toward basic residues.

This sequence belongs to the bacterial ribosomal protein bL35 family.

In Halorhodospira halophila (strain DSM 244 / SL1) (Ectothiorhodospira halophila (strain DSM 244 / SL1)), this protein is Large ribosomal subunit protein bL35.